The primary structure comprises 482 residues: Signal recognition particle protein (482 aa).

GTP contacts are provided by residues 107–114 (GLQGTGKT), 189–193 (DTAGR), and 247–250 (TKLD). Disordered stretches follow at residues 380 to 413 (MTTEERKNPDLLAKSPSRRRRIAQGSGHSETDVS) and 452 to 482 (FGGQPGPGFRGYRGGGGKPKKKKKKKGFGQL). Over residues 452-468 (FGGQPGPGFRGYRGGGG) the composition is skewed to gly residues. A compositionally biased stretch (basic residues) spans 469–482 (KPKKKKKKKGFGQL).

Belongs to the GTP-binding SRP family. SRP54 subfamily. Part of the signal recognition particle protein translocation system, which is composed of SRP and FtsY.

It localises to the cytoplasm. The catalysed reaction is GTP + H2O = GDP + phosphate + H(+). Functionally, involved in targeting and insertion of nascent membrane proteins into the cytoplasmic membrane. Binds to the hydrophobic signal sequence of the ribosome-nascent chain (RNC) as it emerges from the ribosomes. The SRP-RNC complex is then targeted to the cytoplasmic membrane where it interacts with the SRP receptor FtsY. The protein is Signal recognition particle protein of Synechocystis sp. (strain ATCC 27184 / PCC 6803 / Kazusa).